A 580-amino-acid polypeptide reads, in one-letter code: 2-succinyl-5-enolpyruvyl-6-hydroxy-3-cyclohexene-1-carboxylate synthase (580 aa).

The protein belongs to the TPP enzyme family. MenD subfamily. In terms of assembly, homodimer. It depends on Mg(2+) as a cofactor. Requires Mn(2+) as cofactor. Thiamine diphosphate is required as a cofactor.

It catalyses the reaction isochorismate + 2-oxoglutarate + H(+) = 5-enolpyruvoyl-6-hydroxy-2-succinyl-cyclohex-3-ene-1-carboxylate + CO2. It functions in the pathway quinol/quinone metabolism; 1,4-dihydroxy-2-naphthoate biosynthesis; 1,4-dihydroxy-2-naphthoate from chorismate: step 2/7. It participates in quinol/quinone metabolism; menaquinone biosynthesis. In terms of biological role, catalyzes the thiamine diphosphate-dependent decarboxylation of 2-oxoglutarate and the subsequent addition of the resulting succinic semialdehyde-thiamine pyrophosphate anion to isochorismate to yield 2-succinyl-5-enolpyruvyl-6-hydroxy-3-cyclohexene-1-carboxylate (SEPHCHC). The sequence is that of 2-succinyl-5-enolpyruvyl-6-hydroxy-3-cyclohexene-1-carboxylate synthase from Listeria monocytogenes serovar 1/2a (strain ATCC BAA-679 / EGD-e).